A 203-amino-acid polypeptide reads, in one-letter code: MYGDVANKLVLEAKRTDHLANGSATLQLPMFQDEMVRVILKEVSQLQRNAEYLKLQEDSGKLSKCQYFVTMLCMERNKRCLLAYQKTRSEILDAIAWENNGLDTMDLLSNKGHDSGNLSPYEQEYLREYSQLISDLTAGELMDIDLAGSLTPPSDVFIDVRVLKDAGEIQTEYGVFNLIKDSQFFVRQADVERLIQQGYLQKL.

The protein belongs to the GINS1/PSF1 family. In terms of assembly, component of the GINS complex which is a heterotetramer of SLD5, PSF1, PSF2 and PSF3.

It localises to the nucleus. Functionally, the GINS complex plays an essential role in the initiation of DNA replication. The polypeptide is DNA replication complex GINS protein PSF1 (PSF1) (Eremothecium gossypii (strain ATCC 10895 / CBS 109.51 / FGSC 9923 / NRRL Y-1056) (Yeast)).